Here is a 506-residue protein sequence, read N- to C-terminus: Maturase K (506 aa).

The protein belongs to the intron maturase 2 family. MatK subfamily.

The protein resides in the plastid. The protein localises to the chloroplast. Usually encoded in the trnK tRNA gene intron. Probably assists in splicing its own and other chloroplast group II introns. The chain is Maturase K from Medicago sativa (Alfalfa).